The chain runs to 314 residues: Diisopropyl-fluorophosphatase (314 aa).

Positions 21, 120, 175, 229, 232, 273, and 274 each coordinate Ca(2+). Residue histidine 287 is the Proton acceptor of the active site.

Monomer. Requires Ca(2+) as cofactor.

The enzyme catalyses diisopropyl fluorophosphate + H2O = diisopropyl phosphate + fluoride + 2 H(+). With respect to regulation, inhibited by chelating agents. In terms of biological role, biological function and substrate unknown. However, it is capable of acting on phosphorus anhydride bonds (such as phosphorus-halide and phosphorus-cyanide) in organophosphorus compounds (including nerve gases). The protein is Diisopropyl-fluorophosphatase of Loligo vulgaris (Common European squid).